We begin with the raw amino-acid sequence, 347 residues long: NADH-quinone oxidoreductase subunit H (347 aa).

8 helical membrane passes run Ile-25–Met-45, Phe-95–Ile-115, Ile-128–Gly-148, Ile-168–Phe-188, Gly-200–Val-220, Phe-251–Phe-271, Phe-284–Leu-304, and Val-324–Ser-344.

Belongs to the complex I subunit 1 family. NDH-1 is composed of 14 different subunits. Subunits NuoA, H, J, K, L, M, N constitute the membrane sector of the complex.

It is found in the cell inner membrane. It catalyses the reaction a quinone + NADH + 5 H(+)(in) = a quinol + NAD(+) + 4 H(+)(out). Functionally, NDH-1 shuttles electrons from NADH, via FMN and iron-sulfur (Fe-S) centers, to quinones in the respiratory chain. The immediate electron acceptor for the enzyme in this species is believed to be ubiquinone. Couples the redox reaction to proton translocation (for every two electrons transferred, four hydrogen ions are translocated across the cytoplasmic membrane), and thus conserves the redox energy in a proton gradient. This subunit may bind ubiquinone. The sequence is that of NADH-quinone oxidoreductase subunit H from Psychrobacter cryohalolentis (strain ATCC BAA-1226 / DSM 17306 / VKM B-2378 / K5).